The chain runs to 112 residues: SPbeta prophage-derived uncharacterized protein YoqB (112 aa).

The sequence is that of SPbeta prophage-derived uncharacterized protein YoqB (yoqB) from Bacillus subtilis (strain 168).